We begin with the raw amino-acid sequence, 89 residues long: MSITAERKAEVIKTNARKSGDTGSPEVQVAILSERIVNLTNHFKSHGKDNHSRRGLLKLVSTRRSLLDYVKKKDEARYRALLEKHNIRR.

The span at 1–11 shows a compositional bias: basic and acidic residues; it reads MSITAERKAEV. The segment at 1–25 is disordered; sequence MSITAERKAEVIKTNARKSGDTGSP.

Belongs to the universal ribosomal protein uS15 family. In terms of assembly, part of the 30S ribosomal subunit. Forms a bridge to the 50S subunit in the 70S ribosome, contacting the 23S rRNA.

Its function is as follows. One of the primary rRNA binding proteins, it binds directly to 16S rRNA where it helps nucleate assembly of the platform of the 30S subunit by binding and bridging several RNA helices of the 16S rRNA. Functionally, forms an intersubunit bridge (bridge B4) with the 23S rRNA of the 50S subunit in the ribosome. This Nitrobacter hamburgensis (strain DSM 10229 / NCIMB 13809 / X14) protein is Small ribosomal subunit protein uS15.